The following is a 624-amino-acid chain: NADPH-dependent diflavin oxidoreductase 1 (624 aa).

The Flavodoxin-like domain occupies 6 to 168 (IVILYGSETG…VYYEFEKRII (163 aa)). Residues 12 to 17 (SETGNA), 59 to 62 (STTG), 106 to 115 (LGDSSYPRFN), and Glu-142 contribute to the FMN site. One can recognise an FAD-binding FR-type domain in the interval 226 to 474 (ETIRHGTVKK…LQNNHLLHED (249 aa)). Residues Arg-384, 414-417 (RFYS), and 446-449 (GLCT) each bind FAD. Residues 539 to 540 (SR) and 548 to 552 (AKYVQ) each bind NADP(+). Trp-624 contributes to the FAD binding site.

The protein belongs to the NADPH-dependent diflavin oxidoreductase NDOR1 family. This sequence in the N-terminal section; belongs to the flavodoxin family. In the C-terminal section; belongs to the flavoprotein pyridine nucleotide cytochrome reductase family. As to quaternary structure, interacts with DRE2; as part of the cytosolic iron-sulfur (Fe-S) protein assembly (CIA) machinery. It depends on FAD as a cofactor. Requires FMN as cofactor.

The protein resides in the cytoplasm. It is found in the mitochondrion. It catalyses the reaction 2 oxidized [2Fe-2S]-[protein] + NADPH = 2 reduced [2Fe-2S]-[protein] + NADP(+) + H(+). Functionally, NADPH-dependent reductase which is a central component of the cytosolic iron-sulfur (Fe-S) protein assembly (CIA) machinery. Transfers electrons from NADPH via its FAD and FMN prosthetic groups to the [2Fe-2S] cluster of DRE2, another key component of the CIA machinery. In turn, this reduced cluster provides electrons for assembly of cytosolic iron-sulfur cluster proteins. Positively controls H(2)O(2)-induced cell death. The chain is NADPH-dependent diflavin oxidoreductase 1 from Kluyveromyces lactis (strain ATCC 8585 / CBS 2359 / DSM 70799 / NBRC 1267 / NRRL Y-1140 / WM37) (Yeast).